Here is a 159-residue protein sequence, read N- to C-terminus: Probable minor fimbrial protein (159 aa).

Residues 1 to 6 (MKKMHG) constitute a propeptide, leader sequence. F7 is subject to N-methylphenylalanine. A helical transmembrane segment spans residues 7-29 (FTLIELMIVVAIIGVLASIALMQ). Disulfide bonds link C56–C71 and C140–C153.

Belongs to the N-Me-Phe pilin family. As to quaternary structure, the pili are polar flexible filaments of about 5.4 nanometers diameter and 2.5 micrometers average length; they consist of only a single polypeptide chain arranged in a helical configuration of five subunits per turn in the assembled pilus.

The protein resides in the fimbrium. Its subcellular location is the membrane. The sequence is that of Probable minor fimbrial protein (fimZ) from Dichelobacter nodosus (Bacteroides nodosus).